A 108-amino-acid chain; its full sequence is DNA-directed RNA polymerase subunit omega (108 aa).

The protein belongs to the RNA polymerase subunit omega family. As to quaternary structure, the RNAP catalytic core consists of 2 alpha, 1 beta, 1 beta' and 1 omega subunit. When a sigma factor is associated with the core the holoenzyme is formed, which can initiate transcription.

The catalysed reaction is RNA(n) + a ribonucleoside 5'-triphosphate = RNA(n+1) + diphosphate. Its function is as follows. Promotes RNA polymerase assembly. Latches the N- and C-terminal regions of the beta' subunit thereby facilitating its interaction with the beta and alpha subunits. This Mycolicibacterium paratuberculosis (strain ATCC BAA-968 / K-10) (Mycobacterium paratuberculosis) protein is DNA-directed RNA polymerase subunit omega.